A 276-amino-acid chain; its full sequence is Large ribosomal subunit protein uL2 (276 aa).

The disordered stretch occupies residues 225 to 276 (MNPVDHPHGGGEGRAPVGRKHPVTPWGKPAMGAKTRKKRKLSDKLIVKPRNK). Residues 258–276 (KTRKKRKLSDKLIVKPRNK) show a composition bias toward basic residues.

This sequence belongs to the universal ribosomal protein uL2 family. Part of the 50S ribosomal subunit. Forms a bridge to the 30S subunit in the 70S ribosome.

One of the primary rRNA binding proteins. Required for association of the 30S and 50S subunits to form the 70S ribosome, for tRNA binding and peptide bond formation. It has been suggested to have peptidyltransferase activity; this is somewhat controversial. Makes several contacts with the 16S rRNA in the 70S ribosome. The chain is Large ribosomal subunit protein uL2 from Moorella thermoacetica (strain ATCC 39073 / JCM 9320).